A 179-amino-acid polypeptide reads, in one-letter code: Sec-independent protein translocase protein TatB (179 aa).

A helical membrane pass occupies residues 1 to 21; the sequence is MLDLGLSKMALIGVVALVVLG. Over residues 101–115 the composition is skewed to low complexity; the sequence is GAAGDAGSVGSPGSD. Positions 101–134 are disordered; the sequence is GAAGDAGSVGSPGSDTPAAPSWRGSSAALAPKRR.

Belongs to the TatB family. The Tat system comprises two distinct complexes: a TatABC complex, containing multiple copies of TatA, TatB and TatC subunits, and a separate TatA complex, containing only TatA subunits. Substrates initially bind to the TatABC complex, which probably triggers association of the separate TatA complex to form the active translocon.

Its subcellular location is the cell inner membrane. Functionally, part of the twin-arginine translocation (Tat) system that transports large folded proteins containing a characteristic twin-arginine motif in their signal peptide across membranes. Together with TatC, TatB is part of a receptor directly interacting with Tat signal peptides. TatB may form an oligomeric binding site that transiently accommodates folded Tat precursor proteins before their translocation. The protein is Sec-independent protein translocase protein TatB of Burkholderia orbicola (strain AU 1054).